The primary structure comprises 124 residues: MTHDPYYETMYILRPDIPEEEVESHLTKYRDMLVEAGAEVLDNQMRGKRRLAYPIAKHKEGIYVQLSHNGDGQHVAVLEKAMRLSEDVIRYLTVKQEGPLPAPRVMPGSEAAQQQQAEAAASAD.

The interval 99-124 (PLPAPRVMPGSEAAQQQQAEAAASAD) is disordered. A compositionally biased stretch (low complexity) spans 109 to 124 (SEAAQQQQAEAAASAD).

Belongs to the bacterial ribosomal protein bS6 family.

Functionally, binds together with bS18 to 16S ribosomal RNA. This chain is Small ribosomal subunit protein bS6, found in Synechococcus sp. (strain CC9605).